The sequence spans 65 residues: Large ribosomal subunit protein bL35c (65 aa).

The protein belongs to the bacterial ribosomal protein bL35 family.

The protein resides in the plastid. It is found in the cyanelle. The protein is Large ribosomal subunit protein bL35c (rpl35) of Cyanophora paradoxa.